A 131-amino-acid chain; its full sequence is Large ribosomal subunit protein bL12 (131 aa).

This sequence belongs to the bacterial ribosomal protein bL12 family. As to quaternary structure, homodimer. Part of the ribosomal stalk of the 50S ribosomal subunit. Forms a multimeric L10(L12)X complex, where L10 forms an elongated spine to which 2 to 4 L12 dimers bind in a sequential fashion. Binds GTP-bound translation factors.

Its function is as follows. Forms part of the ribosomal stalk which helps the ribosome interact with GTP-bound translation factors. Is thus essential for accurate translation. This chain is Large ribosomal subunit protein bL12, found in Prochlorococcus marinus subsp. pastoris (strain CCMP1986 / NIES-2087 / MED4).